The following is a 676-amino-acid chain: Transketolase 7 (676 aa).

His36 is a substrate binding site. Thiamine diphosphate-binding positions include His76 and 125–127; that span reads GPL. Asp166 contributes to the Mg(2+) binding site. Residues Gly167 and Asn196 each contribute to the thiamine diphosphate site. 2 residues coordinate Mg(2+): Asn196 and Ile198. Residues His273, Arg367, and Ser394 each contribute to the substrate site. His273 is a thiamine diphosphate binding site. Thiamine diphosphate-binding residues include Glu421 and Phe448. Catalysis depends on Glu421, which acts as the Proton donor. Positions 472, 480, and 531 each coordinate substrate.

This sequence belongs to the transketolase family. In terms of assembly, homodimer. The cofactor is Mg(2+). Ca(2+) serves as cofactor. It depends on Mn(2+) as a cofactor. Requires Co(2+) as cofactor. Thiamine diphosphate is required as a cofactor. In terms of tissue distribution, leaves and roots.

It carries out the reaction D-sedoheptulose 7-phosphate + D-glyceraldehyde 3-phosphate = aldehydo-D-ribose 5-phosphate + D-xylulose 5-phosphate. In terms of biological role, could be involved in the conversion of sugars, which are a major phenomenon in the rehydration process. Functionally, catalyzes the transfer of a two-carbon ketol group from a ketose donor to an aldose acceptor, via a covalent intermediate with the cofactor thiamine pyrophosphate. This chain is Transketolase 7 (TKT7), found in Craterostigma plantagineum (Blue gem).